The sequence spans 499 residues: Lysine--tRNA ligase (499 aa).

Mg(2+) contacts are provided by Glu-408 and Glu-415.

The protein belongs to the class-II aminoacyl-tRNA synthetase family. Homodimer. The cofactor is Mg(2+).

It is found in the cytoplasm. The enzyme catalyses tRNA(Lys) + L-lysine + ATP = L-lysyl-tRNA(Lys) + AMP + diphosphate. This chain is Lysine--tRNA ligase, found in Bacillus cytotoxicus (strain DSM 22905 / CIP 110041 / 391-98 / NVH 391-98).